A 258-amino-acid chain; its full sequence is Regulatory protein RecX (258 aa).

The protein belongs to the RecX family.

The protein resides in the cytoplasm. Functionally, modulates RecA activity. In Streptococcus pneumoniae (strain JJA), this protein is Regulatory protein RecX.